The chain runs to 31 residues: GSIPACGESCFKGKCYTPGCTCSKYPLCAKN.

A cross-link (cyclopeptide (Gly-Asn)) is located at residues 1–31 (GSIPACGESCFKGKCYTPGCTCSKYPLCAKN). 3 disulfide bridges follow: Cys6/Cys20, Cys10/Cys22, and Cys15/Cys28.

This sequence belongs to the cyclotide family. Post-translationally, this is a cyclic peptide.

Functionally, probably participates in a plant defense mechanism. The sequence is that of Cyclotide vinc-B from Viola inconspicua.